Here is a 96-residue protein sequence, read N- to C-terminus: UPF0235 protein Pfl01_5322 (96 aa).

The protein belongs to the UPF0235 family.

This chain is UPF0235 protein Pfl01_5322, found in Pseudomonas fluorescens (strain Pf0-1).